The sequence spans 306 residues: UDP-3-O-acyl-N-acetylglucosamine deacetylase (306 aa).

Zn(2+)-binding residues include H79, H238, and D242. The active-site Proton donor is the H265.

It belongs to the LpxC family. Zn(2+) is required as a cofactor.

It carries out the reaction a UDP-3-O-[(3R)-3-hydroxyacyl]-N-acetyl-alpha-D-glucosamine + H2O = a UDP-3-O-[(3R)-3-hydroxyacyl]-alpha-D-glucosamine + acetate. The protein operates within glycolipid biosynthesis; lipid IV(A) biosynthesis; lipid IV(A) from (3R)-3-hydroxytetradecanoyl-[acyl-carrier-protein] and UDP-N-acetyl-alpha-D-glucosamine: step 2/6. Functionally, catalyzes the hydrolysis of UDP-3-O-myristoyl-N-acetylglucosamine to form UDP-3-O-myristoylglucosamine and acetate, the committed step in lipid A biosynthesis. This is UDP-3-O-acyl-N-acetylglucosamine deacetylase from Yersinia pseudotuberculosis serotype O:1b (strain IP 31758).